We begin with the raw amino-acid sequence, 666 residues long: Peptidase S41 family protein phomP1' (666 aa).

The N-terminal stretch at 1–27 (MSSFLVQTAVVRLFLLGVVFWFPFALS) is a signal peptide. N-linked (GlcNAc...) asparagine glycans are attached at residues asparagine 70, asparagine 214, and asparagine 234. A peptidase S41 domain region spans residues 303–504 (DVAVLQITSF…LLQAQGVRTV (202 aa)). 2 N-linked (GlcNAc...) asparagine glycosylation sites follow: asparagine 555 and asparagine 612.

The protein belongs to the peptidase S41A family.

The protein operates within mycotoxin biosynthesis. Its function is as follows. Peptidase S41 family protein; part of the gene cluster that mediates the biosynthesis of the phomopsins, a group of hexapeptide mycotoxins which infects lupins and causes lupinosis disease in livestock. Within the pathway, phomP1 and phomP1' are probably involved in the processing of the phomA and phomA' precursors. The pathway starts with the processing of the precursor phomA by several endopeptidases including kexin proteases as well as the cluster-specific S41 family peptidase phomP1 and the oligopeptidase phomG to produce 10 identical copies of the hexapeptide Tyr-Val-Ile-Pro-Ile-Asp. After being excised from the precursor peptide, the core peptides are cyclized and modified post-translationally by enzymes encoded within the gene cluster. The timing and order of proteolysis of the phomA precursor and PTMs are still unknown. Two tyrosinase-like enzymes, phomQ1 and phomQ2, catalyze the chlorination and hydroxylation of Tyr, respectively. PhomYb, is proposed to be involved in the construction of the macrocyclic structure. The other 4 ustYa family proteins may be involved in PTMs that generate the unique structure of phomopsin A. PhomYa is required for the hydroxylation of C-beta of Tyr. PhomYc, phomYd, and phomYe are responsible for the biosynthesis of 2,3-dehydroisoleucine (dIle), 2,3-dehydroaspartic acid (dAsp), and 3,4-dehydroproline (dPro), respectively. While dIle formation by phomYc is indispensable for the installation of dAsp by phomYd, the order of the other PTMs have not been elucidated yet. Most of the biosynthetic enzymes likely have broad substrate specificity, and thus, there might be a metabolic grid from a precursor to phomopsin A. The enzyme(s) responsible for the biosynthesis of 3,4-dehydrovaline (dVal) have also not been identified yet. Finally, phomM acts as an S-adenosylmethionine-dependent alpha-N-methyltransferase that catalyzes two successive N-methylation reactions, converting N-desmethyl-phomopsin A to phomopsin A and phomopsin A further to an N,N-dimethylated congener called phomopsin E. The sequence is that of Peptidase S41 family protein phomP1' from Diaporthe leptostromiformis (Lupinosis disease fungus).